The following is a 377-amino-acid chain: Phospho-N-acetylmuramoyl-pentapeptide-transferase (377 aa).

The next 10 membrane-spanning stretches (helical) occupy residues 27-47 (TAFASLTALLIALLIGPYVIE), 71-91 (GTPTMGGVLICIAILLPTLLW), 94-114 (LSDPFVWIVMLSTLAFGAIGF), 139-159 (ILASAAIGVALVVLQGQGSYS), 182-202 (VPHLAYFAFIPFVIFVIIVIV), 216-236 (GLAIGCTIIAAGALTVLTYVS), 252-272 (MVGEVTIFCGAMVGASIGFLW), 280-300 (IFMGDVGSLALGGAIATVAVV), 305-325 (LLLPFIGGIFVLEALSVILQV), and 354-374 (KVIVRFWIAALVFALFALTTL).

It belongs to the glycosyltransferase 4 family. MraY subfamily. Mg(2+) is required as a cofactor.

Its subcellular location is the cell inner membrane. It catalyses the reaction UDP-N-acetyl-alpha-D-muramoyl-L-alanyl-gamma-D-glutamyl-meso-2,6-diaminopimeloyl-D-alanyl-D-alanine + di-trans,octa-cis-undecaprenyl phosphate = di-trans,octa-cis-undecaprenyl diphospho-N-acetyl-alpha-D-muramoyl-L-alanyl-D-glutamyl-meso-2,6-diaminopimeloyl-D-alanyl-D-alanine + UMP. The protein operates within cell wall biogenesis; peptidoglycan biosynthesis. Its function is as follows. Catalyzes the initial step of the lipid cycle reactions in the biosynthesis of the cell wall peptidoglycan: transfers peptidoglycan precursor phospho-MurNAc-pentapeptide from UDP-MurNAc-pentapeptide onto the lipid carrier undecaprenyl phosphate, yielding undecaprenyl-pyrophosphoryl-MurNAc-pentapeptide, known as lipid I. The protein is Phospho-N-acetylmuramoyl-pentapeptide-transferase of Acidobacterium capsulatum (strain ATCC 51196 / DSM 11244 / BCRC 80197 / JCM 7670 / NBRC 15755 / NCIMB 13165 / 161).